The chain runs to 543 residues: Chaperonin GroEL (543 aa).

ATP is bound by residues 29–32 (TLGP), 86–90 (DGTTT), G413, 476–478 (NAA), and D492.

This sequence belongs to the chaperonin (HSP60) family. As to quaternary structure, forms a cylinder of 14 subunits composed of two heptameric rings stacked back-to-back. Interacts with the co-chaperonin GroES.

It is found in the cytoplasm. It catalyses the reaction ATP + H2O + a folded polypeptide = ADP + phosphate + an unfolded polypeptide.. Its function is as follows. Together with its co-chaperonin GroES, plays an essential role in assisting protein folding. The GroEL-GroES system forms a nano-cage that allows encapsulation of the non-native substrate proteins and provides a physical environment optimized to promote and accelerate protein folding. The protein is Chaperonin GroEL of Streptococcus pyogenes serotype M5 (strain Manfredo).